A 106-amino-acid polypeptide reads, in one-letter code: MNDSQYNLIAEALLLAIEEAIEDSGVDIDYEGVGGLLTLTFKNNSKVIINKQAPLHEIWVATKFNGHHFVLNNDSWTDKRSGEEFWQFLSNAVSTQAETELTLSAQ.

This sequence belongs to the frataxin family.

Its function is as follows. Involved in iron-sulfur (Fe-S) cluster assembly. May act as a regulator of Fe-S biogenesis. In Colwellia psychrerythraea (strain 34H / ATCC BAA-681) (Vibrio psychroerythus), this protein is Iron-sulfur cluster assembly protein CyaY.